Here is a 247-residue protein sequence, read N- to C-terminus: Trypsin (247 aa).

An N-terminal signal peptide occupies residues 1–21; that stretch reads LTTVISYFALVAFALVGVSYA. Positions 22–30 are cleaved as a propeptide — activation peptide; that stretch reads TPKASINGR. Positions 31–247 constitute a Peptidase S1 domain; that stretch reads IVGGEMTDIS…QSNFPGVYGI (217 aa). An intrachain disulfide couples Cys-61 to Cys-77. Residues His-76 and Asp-120 each act as charge relay system in the active site. 2 cysteine pairs are disulfide-bonded: Cys-185/Cys-201 and Cys-212/Cys-236. Ser-216 (charge relay system) is an active-site residue.

It belongs to the peptidase S1 family. As to expression, midgut.

It localises to the secreted. It is found in the extracellular space. It carries out the reaction Preferential cleavage: Arg-|-Xaa, Lys-|-Xaa.. This chain is Trypsin, found in Simulium vittatum (Striped black fly).